The chain runs to 62 residues: UPF0434 protein Fphi_1862 (62 aa).

The protein belongs to the UPF0434 family.

The protein is UPF0434 protein Fphi_1862 of Francisella philomiragia subsp. philomiragia (strain ATCC 25017 / CCUG 19701 / FSC 153 / O#319-036).